The primary structure comprises 1096 residues: MDDALHALSSLTAKKRTTTYKKVAVPILDENDNTNGNGPNDIDNPPELTGNGFLFANATLNRVKNRLEGKKAPEQNHNNGKDRSENSLPTQLISNLYDGGEELEKSEVKDNSYSEKNVSSSFTQTQRIPVSIQQDKVFNVPIHSVNDGKPTQLIKEDGLVNETSQALKTPLTTGRPGATQRIDSSGATSQTQPIKSIEPQSQIITTSSNHSNALSPKIPIIPTELIGTSPLFQSIQNRGPDTQMDVPPQTAHDEDKTQAIGIPQATHQEQKTQIDTVAQTLQDEVPHTLKIREIQSELASEDSKREKARNVEYKKPQKPIPTKKFFSKESFLADFDDSSSNEDDDIKLENAHPKPVQNDDELHENKSVELNLTDETRINEKRVPLLSSYANNLKREIDSSKCITLDLDSDSDEYGDDDMDSIKLSKDESVLPISQLSKATILNLKARLSKQNQKLSQRPNKSKDPKVDHNVLLNTLRKASRKQILDHQKEVIETKGLKLEDMAKEKEIVENLLEQEILRNKRIRQKEKRREKLEENDFQLNAHDSGSDSGSESSGFALSGNEIADYESSGSENDNRRESDSEKEDDEIILKQKKSHHVKHIINESDSDTEVEAKPKEKADESLPKRIAINLGHYGDNIGEDTDKFQETNVLDTQNIEEVMAERNTIENEVKDDVYVNEEADEAIRRQLIDKEKLQLKQKEKEHEAKIKELKKRGVTNFFEMEAEESEDEWHGIGGADGEGSDDYDSDLEKMIDDYSKNNFNPHEIREMLAAENKEMDIKMINKILYDIKNGGFRNKRAKNSLELELSDDDEDDVLQQYRLKRRELMRKRRLEIGDDAKLVKNPKSSAFFESMVEDIIEYKNPFGAEEEYNLDITSTATDLDTQDNSINVGDNTGNNEQKPVDQKNKKVIISEDFVQKSLSFLKSNNYEDFETDKELSRIQHGNDEAIEDLYTLKQNSSIKSFTNSQTDSTTSKTVNTIIDLEKRPEDEDEVENGDTSLVGVFKHPSIIKSFASRTDINDKFKEGNKTVKILKSYKTVGSSKASITYMGKTRKLIAPKRKTEGSHRYHHDHHNKKMKMKTKTKSNKLFESGQDSFDN.

The segment covering 68-85 (EGKKAPEQNHNNGKDRSE) has biased composition (basic and acidic residues). Positions 68–90 (EGKKAPEQNHNNGKDRSENSLPT) are disordered. The residue at position 144 (S144) is a Phosphoserine. 3 disordered regions span residues 166 to 200 (ALKTPLTTGRPGATQRIDSSGATSQTQPIKSIEPQ), 294 to 316 (IQSELASEDSKREKARNVEYKKP), and 336 to 365 (DDSSSNEDDDIKLENAHPKPVQNDDELHEN). The span at 181–200 (RIDSSGATSQTQPIKSIEPQ) shows a compositional bias: polar residues. Residues 294–315 (IQSELASEDSKREKARNVEYKK) are compositionally biased toward basic and acidic residues. Over residues 336-346 (DDSSSNEDDDI) the composition is skewed to acidic residues. A phosphoserine mark is found at S409, S411, and S434. Positions 488 to 542 (QKEVIETKGLKLEDMAKEKEIVENLLEQEILRNKRIRQKEKRREKLEENDFQLNA) form a coiled coil. The segment at 527-620 (EKRREKLEEN…VEAKPKEKAD (94 aa)) is disordered. A compositionally biased stretch (low complexity) spans 547-560 (SDSGSESSGFALSG). Residues 591-600 (KQKKSHHVKH) show a composition bias toward basic residues. 2 positions are modified to phosphoserine: S605 and S607. T609 carries the post-translational modification Phosphothreonine. The span at 611 to 620 (VEAKPKEKAD) shows a compositional bias: basic and acidic residues. The stretch at 652-716 (DTQNIEEVMA…IKELKKRGVT (65 aa)) forms a coiled coil. The interval 724-743 (EESEDEWHGIGGADGEGSDD) is disordered. Residues S801 and S807 each carry the phosphoserine modification. Over residues 881 to 898 (DTQDNSINVGDNTGNNEQ) the composition is skewed to polar residues. Positions 881 to 903 (DTQDNSINVGDNTGNNEQKPVDQ) are disordered. Position 911 is a phosphoserine (S911). Residues 1058–1096 (RKTEGSHRYHHDHHNKKMKMKTKTKSNKLFESGQDSFDN) are disordered. Residues 1065-1083 (RYHHDHHNKKMKMKTKTKS) show a composition bias toward basic residues.

Interacts with CDC45 in S phase. Post-translationally, phosphorylated by MEC1 and RAD53.

It is found in the nucleus. Functionally, required for normal DNA replication. Phosphorylated in response to DNA replication stress. Phosphorylation allows it to mediate the activation of RAD53. This Saccharomyces cerevisiae (strain ATCC 204508 / S288c) (Baker's yeast) protein is Mediator of replication checkpoint protein 1 (MRC1).